The following is a 389-amino-acid chain: Phosphatidylglycerol--prolipoprotein diacylglyceryl transferase (389 aa).

Helical transmembrane passes span 28–48, 58–78, 98–118, and 148–168; these read IIVA…LIYF, FFIF…YFLI, LAIQ…FNVF, and ISVF…QAIG. Residue arginine 169 participates in a 1,2-diacyl-sn-glycero-3-phospho-(1'-sn-glycerol) binding. Helical transmembrane passes span 220–240, 281–301, and 309–329; these read IPLF…IYFV, IVFS…CQTL, and FWTY…TTLF.

It belongs to the Lgt family.

It localises to the cell membrane. The enzyme catalyses L-cysteinyl-[prolipoprotein] + a 1,2-diacyl-sn-glycero-3-phospho-(1'-sn-glycerol) = an S-1,2-diacyl-sn-glyceryl-L-cysteinyl-[prolipoprotein] + sn-glycerol 1-phosphate + H(+). It participates in protein modification; lipoprotein biosynthesis (diacylglyceryl transfer). Catalyzes the transfer of the diacylglyceryl group from phosphatidylglycerol to the sulfhydryl group of the N-terminal cysteine of a prolipoprotein, the first step in the formation of mature lipoproteins. The chain is Phosphatidylglycerol--prolipoprotein diacylglyceryl transferase from Mycoplasma pneumoniae (strain ATCC 29342 / M129 / Subtype 1) (Mycoplasmoides pneumoniae).